Here is a 21-residue protein sequence, read N- to C-terminus: Peptide Hact-2 (21 aa).

Intrachain disulfides connect C1/C18, C5/C14, and C9/C20.

In terms of tissue distribution, expressed in tentacles.

The protein resides in the nematocyst. It is found in the secreted. Peptide of unknown function. Does not exhibit antimicrobial activity against Escherichia coli and Staphylococcus aureus. Promotes cell proliferation of human fibroblast skin cells. Does not exhibit any effect on voltage-gated ion channels, including potassium, sodium, and calcium channels. The chain is Peptide Hact-2 from Heliofungia actiniformis (Mushroom coral).